The sequence spans 552 residues: CTP synthase (552 aa).

Positions 1-270 are amidoligase domain; that stretch reads MTKFVFVTGG…DGLICDKLRL (270 aa). Serine 13 serves as a coordination point for CTP. Residue serine 13 coordinates UTP. ATP contacts are provided by residues 14-19 and aspartate 71; that span reads SLGKGI. Aspartate 71 and glutamate 144 together coordinate Mg(2+). Residues 151–153, 191–196, and lysine 227 contribute to the CTP site; these read DIE and KTKPTQ. UTP is bound by residues 191–196 and lysine 227; that span reads KTKPTQ. Positions 295 to 548 constitute a Glutamine amidotransferase type-1 domain; the sequence is QIAMVGKYVE…IKAAVEHQKP (254 aa). Glycine 357 contributes to the L-glutamine binding site. The active-site Nucleophile; for glutamine hydrolysis is the cysteine 384. L-glutamine-binding positions include 385-388 and glutamate 408; that span reads LGMQ. Positions 432–451 are disordered; it reads KTRSENSDLGGTMRLGAQSS. Arginine 474 contacts L-glutamine. Residues histidine 521 and glutamate 523 contribute to the active site.

Belongs to the CTP synthase family. Homotetramer.

It catalyses the reaction UTP + L-glutamine + ATP + H2O = CTP + L-glutamate + ADP + phosphate + 2 H(+). It carries out the reaction L-glutamine + H2O = L-glutamate + NH4(+). The enzyme catalyses UTP + NH4(+) + ATP = CTP + ADP + phosphate + 2 H(+). It participates in pyrimidine metabolism; CTP biosynthesis via de novo pathway; CTP from UDP: step 2/2. Allosterically activated by GTP, when glutamine is the substrate; GTP has no effect on the reaction when ammonia is the substrate. The allosteric effector GTP functions by stabilizing the protein conformation that binds the tetrahedral intermediate(s) formed during glutamine hydrolysis. Inhibited by the product CTP, via allosteric rather than competitive inhibition. Its function is as follows. Catalyzes the ATP-dependent amination of UTP to CTP with either L-glutamine or ammonia as the source of nitrogen. Regulates intracellular CTP levels through interactions with the four ribonucleotide triphosphates. The protein is CTP synthase of Acidovorax sp. (strain JS42).